We begin with the raw amino-acid sequence, 457 residues long: DDB1- and CUL4-associated factor 10 (457 aa).

WD repeat units follow at residues 65–104 (RTHGAVFNLEYSPDGSVLTVACEQTEVLLFDPVSSKHIKT), 108–146 (AHEDCVNNIRFLDNRMFATCSDDTTIALWDLRKLNSKVC), 150–189 (GHTSWVKNIEYDTNTRLLVTSGFDGNVIIWDTNRCTEDGC), and 195–234 (FHTRFLMRMRLTPDCSKMLISTSSGYLLILHELDLTKSLE). Positions 246 to 265 (TASTSDMTSTSSDTRPSSSP) are enriched in low complexity. The segment at 246-304 (TASTSDMTSTSSDTRPSSSPCHNSDLGPLFEKHMSRSSQREGASPRNSLEVLTPEVPGE) is disordered. Residues 281 to 292 (RSSQREGASPRN) show a composition bias toward polar residues. WD repeat units lie at residues 306–346 (DRGN…QEGA), 368–406 (VGRGYIKELCFSPDGRMIASPYAYGIRLLGFDSQCKELV), and 424–457 (SHKDVVLTTKFSPTHCQIASGCLSGRVTLYQPKF).

It belongs to the WD repeat DCAF10 family.

It functions in the pathway protein modification; protein ubiquitination. May function as a substrate receptor for CUL4-DDB1 E3 ubiquitin-protein ligase complex. This is DDB1- and CUL4-associated factor 10 (dcaf10) from Xenopus tropicalis (Western clawed frog).